Here is a 382-residue protein sequence, read N- to C-terminus: Lipid-A-disaccharide synthase (382 aa).

Belongs to the LpxB family.

The enzyme catalyses 2-N,3-O-bis[(3R)-3-hydroxytetradecanoyl]-alpha-D-glucosaminyl 1-phosphate + UDP-2-N,3-O-bis[(3R)-3-hydroxytetradecanoyl]-alpha-D-glucosamine = lipid A disaccharide (E. coli) + UDP + H(+). It carries out the reaction a lipid X + a UDP-2-N,3-O-bis[(3R)-3-hydroxyacyl]-alpha-D-glucosamine = a lipid A disaccharide + UDP + H(+). It participates in glycolipid biosynthesis; lipid IV(A) biosynthesis; lipid IV(A) from (3R)-3-hydroxytetradecanoyl-[acyl-carrier-protein] and UDP-N-acetyl-alpha-D-glucosamine: step 5/6. In terms of biological role, condensation of UDP-2,3-diacylglucosamine and 2,3-diacylglucosamine-1-phosphate to form lipid A disaccharide, a precursor of lipid A, a phosphorylated glycolipid that anchors the lipopolysaccharide to the outer membrane of the cell. This Escherichia coli O8 (strain IAI1) protein is Lipid-A-disaccharide synthase.